The primary structure comprises 484 residues: GDP-mannose transporter (484 aa).

Basic and acidic residues-rich tracts occupy residues 1-12 and 19-28; these read MSMTTSRERNVP and ELGRSRHSDV. A disordered region spans residues 1–34; sequence MSMTTSRERNVPPDDNEIELGRSRHSDVAPESES. Residues 1–60 are Cytoplasmic-facing; sequence MSMTTSRERNVPPDDNEIELGRSRHSDVAPESESPQAHLLNSDVASVTKNFMRNASHATA. The chain crosses the membrane as a helical span at residues 61-81; it reads NSGAIAAVLSYCIASISMTVI. Over 82–90 the chain is Lumenal; that stretch reads NKFTVSGEK. The helical transmembrane segment at 91 to 111 threads the bilayer; that stretch reads FTMNLLVLLCQCSVGVAMVYA. The Cytoplasmic portion of the chain corresponds to 112-129; the sequence is AKCMGWIQIRTLNMRDVK. A helical membrane pass occupies residues 130–150; sequence TWFPISTMLVFVIYTGSKALQ. At 151–155 the chain is on the lumenal side; sequence HMDIP. A helical transmembrane segment spans residues 156-176; the sequence is IYTIFKNLTIILIAYGELLWF. At 177–179 the chain is on the cytoplasmic side; sequence NGR. The chain crosses the membrane as a helical span at residues 180 to 200; that stretch reads ITPMVFLSFILMVLSSIIAAW. Over 201-287 the chain is Lumenal; sequence PDLAPSTAKT…ASSSTLSSWS (87 aa). Residues 288–308 form a helical membrane-spanning segment; that stretch reads TNGYVWMLANCMISATYVLVM. Over 309-321 the chain is Cytoplasmic; that stretch reads RKRIKLTGFKDWD. Residues 322–342 traverse the membrane as a helical segment; that stretch reads TMFYNNLLSIPVLLFMSLLVE. Asparagine 343 is a glycosylation site (N-linked (GlcNAc...) asparagine). Residues 343–360 lie on the Lumenal side of the membrane; that stretch reads NWSVETFEHNFPREKRST. A helical transmembrane segment spans residues 361–381; sequence LVFAILLSGTGGVFISYTTAW. At 382-390 the chain is on the cytoplasmic side; sequence CIRVTSSTT. A helical membrane pass occupies residues 391-411; that stretch reads YSMVGALNKLPLALSGMLFFG. Residues 412 to 413 lie on the Lumenal side of the membrane; it reads NP. The chain crosses the membrane as a helical span at residues 414–434; sequence VTPYNSIGVAVGFIAGIVYAV. At 435–484 the chain is on the cytoplasmic side; that stretch reads GKYKQVVAARIANSDATGASTSLSSSSSAAPSGEYVFDLKGEIPTHTRQQ.

This sequence belongs to the TPT transporter family. SLC35D subfamily. In terms of assembly, homooligomer.

The protein resides in the golgi apparatus membrane. Its subcellular location is the cytoplasmic vesicle membrane. It is found in the endoplasmic reticulum membrane. Its function is as follows. Involved in the import of GDP-mannose from the cytoplasm into the Golgi lumen. This chain is GDP-mannose transporter (VRG4), found in Malassezia globosa (strain ATCC MYA-4612 / CBS 7966) (Dandruff-associated fungus).